A 508-amino-acid chain; its full sequence is MGSIDNLMAQKLTSQFPMNTLEPEEFRRQGHLMIDFLADYYRKVENYPVRSQVSPGYLREILPESAPYNPESLETILQDVQTKIIPGITHWQSPNFFAYFPSSGSTAGFLGEMLSTGFNVVGFNWMVSPAATELENVVTDWFGKMLQLPKSFLFSGGGGGVLQGTTCEAILCTLVAARDKNLRQHGMDNIGKLVVYCSDQTHSALQKAAKIAGIDPKNFRAIETTKSSNFKLCPKRLESAILYDLQNGLIPLYLCATVGTTSSTTVDPLPALTEVAKKYDLWVHVDAAYAGSACICPEFRQYLDGVENADSFSLNAHKWFLTTLDCCCLWVRDPSALIKSLSTYPEFLKNNASETNKVVDYKDWQIMLSRRFRALKLWFVLRSYGVGQLREFIRGHVGMAKYFEGLVGLDKRFEVVAPRLFSMVCFRIKPSAMIGKNDEDEVNEINRKLLESVNDSGRIYVSHTVLGGIYVIRFAIGGTLTDINHVSAAWKVLQDHADALLDEAFTAN.

Position 318 is an N6-(pyridoxal phosphate)lysine (K318).

The protein belongs to the group II decarboxylase family. In terms of assembly, homodimer. Pyridoxal 5'-phosphate serves as cofactor.

The catalysed reaction is L-tyrosine + H(+) = tyramine + CO2. The sequence is that of Tyrosine decarboxylase 4 (TYRDC-4) from Petroselinum crispum (Parsley).